Reading from the N-terminus, the 413-residue chain is Snake venom metalloproteinase AaPA (413 aa).

Positions 1 to 20 (MIQVLLVTICLAAFPYQGSS) are cleaved as a signal peptide. Residues 21-189 (IILESGKVND…KKASQLIVST (169 aa)) constitute a propeptide that is removed on maturation. In terms of domain architecture, Peptidase M12B spans 193-390 (RYMEIVIVVD…ENPPCILNKP (198 aa)). Positions 196 and 280 each coordinate Ca(2+). Cystine bridges form between cysteine 304–cysteine 385, cysteine 344–cysteine 369, and cysteine 346–cysteine 352. Histidine 329 contacts Zn(2+). Glutamate 330 is an active-site residue. Histidine 333 and histidine 339 together coordinate Zn(2+). Ca(2+) is bound by residues cysteine 385, asparagine 388, valine 400, asparagine 403, leucine 405, glutamate 407, and aspartate 413. Residues 391 to 413 (LRTDTVSTPVSGNELLEAEKDYD) constitute a propeptide that is removed on maturation.

The protein belongs to the venom metalloproteinase (M12B) family. P-I subfamily. As to quaternary structure, monomer. Requires Zn(2+) as cofactor. In terms of tissue distribution, expressed by the venom gland.

The protein localises to the secreted. Its function is as follows. Snake venom zinc metalloprotease that may activate prothrombin. In Deinagkistrodon acutus (Hundred-pace snake), this protein is Snake venom metalloproteinase AaPA.